Consider the following 237-residue polypeptide: 7-cyano-7-deazaguanine synthase (237 aa).

ATP is bound at residue 14–24 (FSGGQDSATCL). Residues Cys202, Cys217, Cys220, and Cys223 each contribute to the Zn(2+) site.

This sequence belongs to the QueC family. Zn(2+) is required as a cofactor.

The catalysed reaction is 7-carboxy-7-deazaguanine + NH4(+) + ATP = 7-cyano-7-deazaguanine + ADP + phosphate + H2O + H(+). It functions in the pathway purine metabolism; 7-cyano-7-deazaguanine biosynthesis. Its function is as follows. Catalyzes the ATP-dependent conversion of 7-carboxy-7-deazaguanine (CDG) to 7-cyano-7-deazaguanine (preQ(0)). In Rhodopseudomonas palustris (strain ATCC BAA-98 / CGA009), this protein is 7-cyano-7-deazaguanine synthase.